The chain runs to 246 residues: uncharacterized protein (246 aa).

Positions 204–243 (TTKLKKLEKEIHELPYMLINGKITYEEYKKRIREIEKEIG) form a coiled coil.

This is an uncharacterized protein from Aquifex aeolicus (strain VF5).